The chain runs to 496 residues: tRNA-2-methylthio-N(6)-dimethylallyladenosine synthase (496 aa).

The 117-residue stretch at 10–126 (RTYEVRTYGC…LPALLERARV (117 aa)) folds into the MTTase N-terminal domain. Residues C19, C55, C89, C163, C167, and C170 each contribute to the [4Fe-4S] cluster site. The Radical SAM core domain occupies 149–380 (RESAYAAWVS…ALVNEIAWEE (232 aa)). The TRAM domain occupies 382 to 451 (KRLVGRRVEL…PHHLVADGPV (70 aa)). Residues 465 to 496 (ARNAAPAPSSGVTLGMPTVGAPAPLPDAPACR) are disordered. A compositionally biased stretch (pro residues) spans 487–496 (APLPDAPACR).

The protein belongs to the methylthiotransferase family. MiaB subfamily. Monomer. The cofactor is [4Fe-4S] cluster.

It localises to the cytoplasm. The enzyme catalyses N(6)-dimethylallyladenosine(37) in tRNA + (sulfur carrier)-SH + AH2 + 2 S-adenosyl-L-methionine = 2-methylsulfanyl-N(6)-dimethylallyladenosine(37) in tRNA + (sulfur carrier)-H + 5'-deoxyadenosine + L-methionine + A + S-adenosyl-L-homocysteine + 2 H(+). Functionally, catalyzes the methylthiolation of N6-(dimethylallyl)adenosine (i(6)A), leading to the formation of 2-methylthio-N6-(dimethylallyl)adenosine (ms(2)i(6)A) at position 37 in tRNAs that read codons beginning with uridine. The polypeptide is tRNA-2-methylthio-N(6)-dimethylallyladenosine synthase (Nocardioides sp. (strain ATCC BAA-499 / JS614)).